Reading from the N-terminus, the 924-residue chain is Protein translocase subunit SecA (924 aa).

Residues Gln87, 105-109 (GEGKT), and Asp515 each bind ATP. Zn(2+)-binding residues include Cys908, Cys910, Cys919, and His920.

This sequence belongs to the SecA family. As to quaternary structure, monomer and homodimer. Part of the essential Sec protein translocation apparatus which comprises SecA, SecYEG and auxiliary proteins SecDF-YajC and YidC. Zn(2+) is required as a cofactor.

The protein resides in the cell inner membrane. It is found in the cytoplasm. The enzyme catalyses ATP + H2O + cellular proteinSide 1 = ADP + phosphate + cellular proteinSide 2.. In terms of biological role, part of the Sec protein translocase complex. Interacts with the SecYEG preprotein conducting channel. Has a central role in coupling the hydrolysis of ATP to the transfer of proteins into and across the cell membrane, serving both as a receptor for the preprotein-SecB complex and as an ATP-driven molecular motor driving the stepwise translocation of polypeptide chains across the membrane. The protein is Protein translocase subunit SecA of Cupriavidus pinatubonensis (strain JMP 134 / LMG 1197) (Cupriavidus necator (strain JMP 134)).